The primary structure comprises 91 residues: MRHIKVNVKGQVQGVGFRYFTQQAATENAIVGWVRNEDDGSVLIEAQGEDKNVDAFLNEVEKGPTKFARVQDMEVKELAEDTELTKFEVKY.

The region spanning 3 to 91 is the Acylphosphatase-like domain; that stretch reads HIKVNVKGQV…TELTKFEVKY (89 aa). Active-site residues include R18 and N36.

The protein belongs to the acylphosphatase family.

It catalyses the reaction an acyl phosphate + H2O = a carboxylate + phosphate + H(+). This is Acylphosphatase (acyP) from Oceanobacillus iheyensis (strain DSM 14371 / CIP 107618 / JCM 11309 / KCTC 3954 / HTE831).